A 219-amino-acid chain; its full sequence is 3,4-dihydroxy-2-butanone 4-phosphate synthase (219 aa).

Residues 37–38 (RE), Asp42, 150–154 (RRGHT), and Glu174 each bind D-ribulose 5-phosphate. Glu38 contacts Mg(2+). Residue His153 participates in Mg(2+) binding.

This sequence belongs to the DHBP synthase family. In terms of assembly, homodimer. It depends on Mg(2+) as a cofactor. Mn(2+) is required as a cofactor.

It catalyses the reaction D-ribulose 5-phosphate = (2S)-2-hydroxy-3-oxobutyl phosphate + formate + H(+). The protein operates within cofactor biosynthesis; riboflavin biosynthesis; 2-hydroxy-3-oxobutyl phosphate from D-ribulose 5-phosphate: step 1/1. Catalyzes the conversion of D-ribulose 5-phosphate to formate and 3,4-dihydroxy-2-butanone 4-phosphate. This is 3,4-dihydroxy-2-butanone 4-phosphate synthase from Edwardsiella ictaluri (strain 93-146).